We begin with the raw amino-acid sequence, 244 residues long: tRNA (guanine-N(7)-)-methyltransferase (244 aa).

Pro residues predominate over residues 1-11 (MTDTHVPPPEL). Positions 1–23 (MTDTHVPPPELPAAEEGEERPHR) are disordered. S-adenosyl-L-methionine contacts are provided by E74, E99, D126, and D149. The active site involves D149. Substrate-binding positions include K153, D185, and 222–225 (TKFE).

This sequence belongs to the class I-like SAM-binding methyltransferase superfamily. TrmB family.

It catalyses the reaction guanosine(46) in tRNA + S-adenosyl-L-methionine = N(7)-methylguanosine(46) in tRNA + S-adenosyl-L-homocysteine. It participates in tRNA modification; N(7)-methylguanine-tRNA biosynthesis. Functionally, catalyzes the formation of N(7)-methylguanine at position 46 (m7G46) in tRNA. In Pseudomonas syringae pv. tomato (strain ATCC BAA-871 / DC3000), this protein is tRNA (guanine-N(7)-)-methyltransferase.